The following is a 495-amino-acid chain: 3-octaprenyl-4-hydroxybenzoate carboxy-lyase (495 aa).

Asn-172 lines the Mn(2+) pocket. Prenylated FMN is bound by residues 175–177, 189–191, and 194–195; these read IYR, RWL, and RG. Glu-238 provides a ligand contact to Mn(2+). Catalysis depends on Asp-287, which acts as the Proton donor.

Belongs to the UbiD family. In terms of assembly, homohexamer. Prenylated FMN serves as cofactor. The cofactor is Mn(2+).

The protein localises to the cell membrane. It catalyses the reaction a 4-hydroxy-3-(all-trans-polyprenyl)benzoate + H(+) = a 2-(all-trans-polyprenyl)phenol + CO2. The protein operates within cofactor biosynthesis; ubiquinone biosynthesis. In terms of biological role, catalyzes the decarboxylation of 3-octaprenyl-4-hydroxy benzoate to 2-octaprenylphenol, an intermediate step in ubiquinone biosynthesis. The protein is 3-octaprenyl-4-hydroxybenzoate carboxy-lyase of Yersinia enterocolitica serotype O:8 / biotype 1B (strain NCTC 13174 / 8081).